Here is a 497-residue protein sequence, read N- to C-terminus: Aspartyl/glutamyl-tRNA(Asn/Gln) amidotransferase subunit B (497 aa).

The protein belongs to the GatB/GatE family. GatB subfamily. Heterotrimer of A, B and C subunits.

It catalyses the reaction L-glutamyl-tRNA(Gln) + L-glutamine + ATP + H2O = L-glutaminyl-tRNA(Gln) + L-glutamate + ADP + phosphate + H(+). The catalysed reaction is L-aspartyl-tRNA(Asn) + L-glutamine + ATP + H2O = L-asparaginyl-tRNA(Asn) + L-glutamate + ADP + phosphate + 2 H(+). Allows the formation of correctly charged Asn-tRNA(Asn) or Gln-tRNA(Gln) through the transamidation of misacylated Asp-tRNA(Asn) or Glu-tRNA(Gln) in organisms which lack either or both of asparaginyl-tRNA or glutaminyl-tRNA synthetases. The reaction takes place in the presence of glutamine and ATP through an activated phospho-Asp-tRNA(Asn) or phospho-Glu-tRNA(Gln). The sequence is that of Aspartyl/glutamyl-tRNA(Asn/Gln) amidotransferase subunit B from Cutibacterium acnes (strain DSM 16379 / KPA171202) (Propionibacterium acnes).